A 379-amino-acid chain; its full sequence is MSRNQPPKIAIVAGEHSGDLLGAGLMQAIAKRHPNATFIGVGGPLMAERGMDSFFAMDDLAVMGIAEVFQQLPKLLKHRKNLVNYLISEQPDVMIGIDAPDFNLTVEARLKKAGISTIHYVSPSVWAWREGRIKGIKKAVDHVLCLLPFEKDFYDKHQLPATFVGHPLADDIPMQWQQTEARNELELEPAVMYLAILPGSRKGEIARMAPVFLKVANKLAERYPELRFVAPMISEARAAQFRELVDQYSPELNIVLPVGESRKVMAAANYLLLTSGTVALEALLIKRPMVVAYRFHWLSYQIIKRLFHAPFFSLPNLLAGKEIVPELAQSDASEEAIEQALVQLIEQDNEPLLEQFTNIHQQLQVSASEKAADVVESFL.

The protein belongs to the LpxB family.

The catalysed reaction is a lipid X + a UDP-2-N,3-O-bis[(3R)-3-hydroxyacyl]-alpha-D-glucosamine = a lipid A disaccharide + UDP + H(+). The protein operates within bacterial outer membrane biogenesis; LPS lipid A biosynthesis. Functionally, condensation of UDP-2,3-diacylglucosamine and 2,3-diacylglucosamine-1-phosphate to form lipid A disaccharide, a precursor of lipid A, a phosphorylated glycolipid that anchors the lipopolysaccharide to the outer membrane of the cell. The polypeptide is Lipid-A-disaccharide synthase (Idiomarina loihiensis (strain ATCC BAA-735 / DSM 15497 / L2-TR)).